Reading from the N-terminus, the 168-residue chain is MSPTTGPQPNPRAWECHHTTGPQPNPRAWECHRMKGPQPNPRAWECHLRRVHNLTPEPGNVTIRGVHILTPEPGNVTIRGVHNLTPEPGNVTERGVHNLTPEPGNVTERGVHNLIPEPGNVTVKRGPQPNPRAWECHRTRGPQPNPRAWECHRTRGPQPNPRAWECHR.

Residues 1–10 are compositionally biased toward pro residues; that stretch reads MSPTTGPQPN. Disordered stretches follow at residues 1–23 and 117–143; these read MSPT…TGPQ and EPGN…RGPQ.

This is an uncharacterized protein from Homo sapiens (Human).